The sequence spans 462 residues: Fez family zinc finger protein 1 (462 aa).

The short motif at 34–49 (PLAFSIERIMSRTPEP) is the Engrailed homology 1 repressor element. 6 consecutive C2H2-type zinc fingers follow at residues 260–282 (FTCE…MPVH), 288–310 (FVCK…KIIH), 316–338 (HKCN…TRIH), 344–366 (FVCE…KLTH), 372–394 (FKCN…MHTH), and 400–423 (FTCP…RKLH). The interval 441-462 (LLLPNREPSPTIQSPQLQKSGY) is disordered. Polar residues predominate over residues 448 to 462 (PSPTIQSPQLQKSGY).

Belongs to the krueppel C2H2-type zinc-finger protein family.

The protein localises to the nucleus. In terms of biological role, transcription repressor. Involved in the development of the forebrain region. The chain is Fez family zinc finger protein 1 (fezf1) from Xenopus tropicalis (Western clawed frog).